Reading from the N-terminus, the 195-residue chain is Protein hunchback (195 aa).

3 disordered regions span residues 16–57 (SHHH…SHTN), 64–83 (LKQQ…QQPM), and 155–195 (LTPP…KYMA). The span at 17 to 29 (HHHHHHHAHHSHH) shows a compositional bias: basic residues. 2 stretches are compositionally biased toward low complexity: residues 33 to 44 (SNSNSNASSPHQ) and 66 to 81 (QQQQ…QQQQ). Positions 176-195 (EPEKEHDLMSNSSEDMKYMA) are enriched in basic and acidic residues.

This sequence belongs to the hunchback C2H2-type zinc-finger protein family.

The protein resides in the nucleus. Its function is as follows. Gap class segmentation protein that controls development of head structures. This Drosophila dasycnemia (Fruit fly) protein is Protein hunchback (hb).